Reading from the N-terminus, the 432-residue chain is MGKSVAILGAQWGDEGKGKIVDLLTDRVKYVVRYQGGHNAGHTLIINGEKTVLRLIPSGILRENVTCLIGNGVVLSPEALMKEMGELEACGINVRERLKISEACPLILPYHVAMDHAREAALGKNKIGTTGRGIGPAYEDKVARRGLRVSDLFDKEAFATKLKDILDLYNFQLVHYYKVEPVDFQKTLDDVFAVADVIKGMVADVTTLLHQARKEGVNILFEGAQGTMLDIDHGTYPFVTSSNTTAGGVATGAGFGPRNLDYVLGIIKAYCTRVGSGPFTTELFNEEGETIARKGNEFGAVTGRPRRCGWFDAVAVRRAVQINSISGFCMTKLDVLDGFETLKICTAYKMPNGEIVEYAPMAAKDWEGVEPIYETMPGWSENTFGVIKYEALPQAALDYIKRIEELVGVPVDILSTGPDRIETMILRDPFVA.

Residues 13–19 and 41–43 contribute to the GTP site; these read GDEGKGK and GHT. Residue D14 is the Proton acceptor of the active site. Positions 14 and 41 each coordinate Mg(2+). IMP-binding positions include 14 to 17, 39 to 42, T130, R144, Q225, T240, and R304; these read DEGK and NAGH. H42 acts as the Proton donor in catalysis. Residue 300 to 306 participates in substrate binding; it reads AVTGRPR. Residues R306, 332–334, and 415–417 contribute to the GTP site; these read KLD and STG.

Belongs to the adenylosuccinate synthetase family. Homodimer. Mg(2+) is required as a cofactor.

The protein resides in the cytoplasm. The catalysed reaction is IMP + L-aspartate + GTP = N(6)-(1,2-dicarboxyethyl)-AMP + GDP + phosphate + 2 H(+). The protein operates within purine metabolism; AMP biosynthesis via de novo pathway; AMP from IMP: step 1/2. In terms of biological role, plays an important role in the de novo pathway of purine nucleotide biosynthesis. Catalyzes the first committed step in the biosynthesis of AMP from IMP. The polypeptide is Adenylosuccinate synthetase (Haemophilus ducreyi (strain 35000HP / ATCC 700724)).